We begin with the raw amino-acid sequence, 175 residues long: Phytochrome-interacting ankyrin-repeat protein 1 (175 aa).

ANK repeat units follow at residues 30–59 (RGWT…DVNA), 67–96 (KGMT…NMEA), and 102–131 (CGWT…FLPD).

As to quaternary structure, interacts with phytochrome A (PHYA), both in Pr and Pfr forms.

Its subcellular location is the cytoplasm. It is found in the nucleus. It localises to the mitochondrion. This Arabidopsis thaliana (Mouse-ear cress) protein is Phytochrome-interacting ankyrin-repeat protein 1.